The primary structure comprises 303 residues: Probable 5-dehydro-4-deoxyglucarate dehydratase (303 aa).

The protein belongs to the DapA family.

It carries out the reaction 5-dehydro-4-deoxy-D-glucarate + H(+) = 2,5-dioxopentanoate + CO2 + H2O. It participates in carbohydrate acid metabolism; D-glucarate degradation; 2,5-dioxopentanoate from D-glucarate: step 2/2. This Ectopseudomonas mendocina (strain ymp) (Pseudomonas mendocina) protein is Probable 5-dehydro-4-deoxyglucarate dehydratase.